The following is an 888-amino-acid chain: Bifunctional lysine-specific demethylase and histidyl-hydroxylase NO66 (888 aa).

Disordered stretches follow at residues 83-157 (AAAK…GSFS), 187-208 (SNNSDFDFDSDGDSNDFDDSDA), and 261-446 (NSTS…NKLS). The span at 98–108 (REKNIAKKQPE) shows a compositional bias: basic and acidic residues. Over residues 116–139 (ENVQKQLENGQENNGTLINLSNGK) the composition is skewed to polar residues. Over residues 192–207 (FDFDSDGDSNDFDDSD) the composition is skewed to acidic residues. The span at 273 to 284 (VEPRKAAKRNEP) shows a compositional bias: basic and acidic residues. Positions 392–403 (KNKNNDNNNIDT) are enriched in low complexity. Residues 404 to 429 (NNKKDANNKKDANNNKDINNKKDANN) show a composition bias toward basic and acidic residues. Residues 430–444 (NKDTNNNKDNNNKNK) are compositionally biased toward low complexity. Residues 564–709 (CSIRILNPST…NLLEVLMPSV (146 aa)) form the JmjC domain. His610, Asp612, and His675 together coordinate Fe cation.

The protein belongs to the ROX family. NO66 subfamily. Fe(2+) is required as a cofactor.

The protein resides in the nucleus. The enzyme catalyses N(6),N(6)-dimethyl-L-lysyl(36)-[histone H3] + 2 2-oxoglutarate + 2 O2 = L-lysyl(36)-[histone H3] + 2 formaldehyde + 2 succinate + 2 CO2. In terms of biological role, oxygenase that can act as both a histone lysine demethylase and a ribosomal histidine hydroxylase. Specifically demethylates 'Lys-4' (H3K4me) and 'Lys-36' (H3K36me) of histone H3, thereby playing a central role in histone code. The protein is Bifunctional lysine-specific demethylase and histidyl-hydroxylase NO66 of Drosophila mojavensis (Fruit fly).